The following is a 142-amino-acid chain: MVVKALRQISVGQNGVGAFIFPCKKITLQYCNWGGSSQGLRDFLTSKRLAKWAEKYPQIQFEVVAKAGHPVLKAEYINGLNKAICVRNLNVDHVELKLKLLRESSGAQLRHYPKNANVLSLNQSVRGVWSPLHVDPALRHRV.

The protein belongs to the mitochondrion-specific ribosomal protein mL43 family. Component of the mitochondrial large ribosomal subunit. Mature mitochondrial ribosomes consist of a small (37S) and a large (54S) subunit. The 37S subunit contains at least 33 different proteins and 1 molecule of RNA (15S). The 54S subunit contains at least 45 different proteins and 1 molecule of RNA (21S).

Its subcellular location is the mitochondrion. The chain is Large ribosomal subunit protein mL43 (MRPL51) from Eremothecium gossypii (strain ATCC 10895 / CBS 109.51 / FGSC 9923 / NRRL Y-1056) (Yeast).